A 156-amino-acid chain; its full sequence is MISWTKAFTKPLKGRIFMPNLFVYGTLREGENNHKYMKEATLLSRKASIAGSLVDTGNGYPGLLLENQLVAGEWYEVSEETLKRIDELEEYFGPGDTRNLFDRIECQVNESGGTHLGWTYVYNRDDYLETRFSDWKQYRLQHASGIEEKQDVPHSL.

Residue 24–27 (YGTL) participates in substrate binding. Glutamate 89 serves as the catalytic Proton acceptor.

It belongs to the gamma-glutamylcyclotransferase family.

It catalyses the reaction gamma-L-glutamyl-butirosin B = butirosin B + 5-oxo-L-proline. Its pathway is antibiotic biosynthesis; butirosin biosynthesis. In terms of biological role, cyclotransferase that catalyzes the last step in the biosynthesis of the aminoglycoside antibiotic butirosin B. Cleaves the amide bond via transamidation using the alpha-amine of the terminal gamma-L-glutamate of the side chain, releasing it as the cyclic 5-oxoproline. The chain is Gamma-L-glutamyl-butirosin B gamma-glutamyl cyclotransferase (btrG) from Niallia circulans (Bacillus circulans).